The sequence spans 425 residues: Glucose-1-phosphate adenylyltransferase (425 aa).

Alpha-D-glucose 1-phosphate-binding positions include tyrosine 109, glycine 175, 190–191 (EK), and serine 208.

It belongs to the bacterial/plant glucose-1-phosphate adenylyltransferase family. Homotetramer.

The enzyme catalyses alpha-D-glucose 1-phosphate + ATP + H(+) = ADP-alpha-D-glucose + diphosphate. It functions in the pathway glycan biosynthesis; glycogen biosynthesis. In terms of biological role, involved in the biosynthesis of ADP-glucose, a building block required for the elongation reactions to produce glycogen. Catalyzes the reaction between ATP and alpha-D-glucose 1-phosphate (G1P) to produce pyrophosphate and ADP-Glc. The sequence is that of Glucose-1-phosphate adenylyltransferase from Saccharophagus degradans (strain 2-40 / ATCC 43961 / DSM 17024).